The primary structure comprises 147 residues: Transthyretin (147 aa).

A signal peptide spans 1–20 (MASHRLLLLCLAGLVFVSEA). Cys-30 is modified (sulfocysteine). Lys-35 contributes to the L-thyroxine binding site. Residue Glu-62 is modified to 4-carboxyglutamate. Ser-72 is subject to Phosphoserine. An L-thyroxine-binding site is contributed by Glu-74. The N-linked (GlcNAc...) asparagine glycan is linked to Asn-118. Ser-137 is an L-thyroxine binding site.

The protein belongs to the transthyretin family. In terms of assembly, homotetramer. Dimer of dimers. In the homotetramer, subunits assemble around a central channel that can accommodate two ligand molecules. Interacts with RBP4. In terms of processing, sulfonation of the reactive cysteine Cys-30 enhances the stability of the native conformation of TTR, avoiding misassembly of the protein leading to amyloid formation. As to expression, detected in liver.

The protein localises to the secreted. Functionally, thyroid hormone-binding protein. Probably transports thyroxine from the bloodstream to the brain. This Pongo abelii (Sumatran orangutan) protein is Transthyretin (TTR).